Reading from the N-terminus, the 237-residue chain is Ribonuclease PH (237 aa).

Residues arginine 86 and 124-126 (GTR) contribute to the phosphate site.

This sequence belongs to the RNase PH family. Homohexameric ring arranged as a trimer of dimers.

The catalysed reaction is tRNA(n+1) + phosphate = tRNA(n) + a ribonucleoside 5'-diphosphate. Its function is as follows. Phosphorolytic 3'-5' exoribonuclease that plays an important role in tRNA 3'-end maturation. Removes nucleotide residues following the 3'-CCA terminus of tRNAs; can also add nucleotides to the ends of RNA molecules by using nucleoside diphosphates as substrates, but this may not be physiologically important. Probably plays a role in initiation of 16S rRNA degradation (leading to ribosome degradation) during starvation. This chain is Ribonuclease PH, found in Nitrobacter winogradskyi (strain ATCC 25391 / DSM 10237 / CIP 104748 / NCIMB 11846 / Nb-255).